A 257-amino-acid chain; its full sequence is Imidazole glycerol phosphate synthase subunit HisF (257 aa).

Catalysis depends on residues aspartate 11 and aspartate 130.

This sequence belongs to the HisA/HisF family. In terms of assembly, heterodimer of HisH and HisF.

The protein localises to the cytoplasm. It catalyses the reaction 5-[(5-phospho-1-deoxy-D-ribulos-1-ylimino)methylamino]-1-(5-phospho-beta-D-ribosyl)imidazole-4-carboxamide + L-glutamine = D-erythro-1-(imidazol-4-yl)glycerol 3-phosphate + 5-amino-1-(5-phospho-beta-D-ribosyl)imidazole-4-carboxamide + L-glutamate + H(+). The protein operates within amino-acid biosynthesis; L-histidine biosynthesis; L-histidine from 5-phospho-alpha-D-ribose 1-diphosphate: step 5/9. Its function is as follows. IGPS catalyzes the conversion of PRFAR and glutamine to IGP, AICAR and glutamate. The HisF subunit catalyzes the cyclization activity that produces IGP and AICAR from PRFAR using the ammonia provided by the HisH subunit. The polypeptide is Imidazole glycerol phosphate synthase subunit HisF (Shewanella sp. (strain MR-4)).